The following is a 196-amino-acid chain: GTP cyclohydrolase 1 (196 aa).

Zn(2+)-binding residues include Cys-86, His-89, and Cys-158.

This sequence belongs to the GTP cyclohydrolase I family. As to quaternary structure, homomer.

The enzyme catalyses GTP + H2O = 7,8-dihydroneopterin 3'-triphosphate + formate + H(+). It functions in the pathway cofactor biosynthesis; 7,8-dihydroneopterin triphosphate biosynthesis; 7,8-dihydroneopterin triphosphate from GTP: step 1/1. The chain is GTP cyclohydrolase 1 from Clostridium botulinum (strain Loch Maree / Type A3).